The following is a 214-amino-acid chain: Charged multivesicular body protein 2b-A (214 aa).

A coiled-coil region spans residues 25 to 55 (QRAITRDRTALEKQEKQLEMEIKKMAKAGNK). A disordered region spans residues 178-214 (MAKAPSAAKGLPSASASKSTGISDEEIERQLKALGVD). An MIT-interacting motif motif is present at residues 202-212 (EEIERQLKALG).

This sequence belongs to the SNF7 family. As to quaternary structure, probable core component of the endosomal sorting required for transport complex III (ESCRT-III). ESCRT-III components are thought to multimerize to form a flat lattice on the perimeter membrane of the endosome.

The protein localises to the cytoplasm. Its subcellular location is the cytosol. It localises to the late endosome membrane. Functionally, probable core component of the endosomal sorting required for transport complex III (ESCRT-III) which is involved in multivesicular bodies (MVBs) formation and sorting of endosomal cargo proteins into MVBs. MVBs contain intraluminal vesicles (ILVs) that are generated by invagination and scission from the limiting membrane of the endosome and mostly are delivered to lysosomes enabling degradation of membrane proteins, such as stimulated growth factor receptors, lysosomal enzymes and lipids. The protein is Charged multivesicular body protein 2b-A (chmp2b-a) of Xenopus laevis (African clawed frog).